The sequence spans 97 residues: Citrate lyase acyl carrier protein (97 aa).

Serine 14 is subject to O-(phosphoribosyl dephospho-coenzyme A)serine.

This sequence belongs to the CitD family. In terms of assembly, oligomer with a subunit composition of (alpha,beta,gamma)6.

The protein resides in the cytoplasm. Covalent carrier of the coenzyme of citrate lyase. This chain is Citrate lyase acyl carrier protein, found in Escherichia fergusonii (strain ATCC 35469 / DSM 13698 / CCUG 18766 / IAM 14443 / JCM 21226 / LMG 7866 / NBRC 102419 / NCTC 12128 / CDC 0568-73).